The chain runs to 577 residues: Probable HECT-type ubiquitin ligase-interacting protein creD (577 aa).

Disordered regions lie at residues 376–398 (LDPA…GTLS) and 428–566 (NLHA…EEER). 2 stretches are compositionally biased toward polar residues: residues 428 to 447 (NLHA…NQLE) and 460 to 472 (SSGS…TSPE). The segment covering 473–486 (LSRRPSDEVDHDHV) has biased composition (basic and acidic residues). Residues 528–544 (SPQQAHVRSANRSSSYF) are compositionally biased toward polar residues.

It belongs to the arrestin family. As to quaternary structure, interacts with hulA.

Component of the regulatory network controlling carbon source utilization through ubiquitination and deubiquitination involving creA, creB, creC, creD and acrB. May be involved in signaling by recognizing appropriately phosphorylated substrates via its arrestin domains and then recruit a HECT-type ubiquitin ligase such as hulA, leading to ubiquitination of the substrate, providing a link between ubiquitination and phosphorylation in protein regulation and stability. The sequence is that of Probable HECT-type ubiquitin ligase-interacting protein creD (creD) from Aspergillus terreus (strain NIH 2624 / FGSC A1156).